We begin with the raw amino-acid sequence, 419 residues long: Serine hydroxymethyltransferase (419 aa).

Residues Leu-122 and 126-128 (GHL) contribute to the (6S)-5,6,7,8-tetrahydrofolate site. Lys-231 carries the N6-(pyridoxal phosphate)lysine modification. 354-356 (SPF) contributes to the (6S)-5,6,7,8-tetrahydrofolate binding site.

This sequence belongs to the SHMT family. As to quaternary structure, homodimer. It depends on pyridoxal 5'-phosphate as a cofactor.

Its subcellular location is the cytoplasm. The enzyme catalyses (6R)-5,10-methylene-5,6,7,8-tetrahydrofolate + glycine + H2O = (6S)-5,6,7,8-tetrahydrofolate + L-serine. It functions in the pathway one-carbon metabolism; tetrahydrofolate interconversion. It participates in amino-acid biosynthesis; glycine biosynthesis; glycine from L-serine: step 1/1. Catalyzes the reversible interconversion of serine and glycine with tetrahydrofolate (THF) serving as the one-carbon carrier. This reaction serves as the major source of one-carbon groups required for the biosynthesis of purines, thymidylate, methionine, and other important biomolecules. Also exhibits THF-independent aldolase activity toward beta-hydroxyamino acids, producing glycine and aldehydes, via a retro-aldol mechanism. The protein is Serine hydroxymethyltransferase of Exiguobacterium sibiricum (strain DSM 17290 / CCUG 55495 / CIP 109462 / JCM 13490 / 255-15).